The following is a 76-amino-acid chain: Small proline-rich protein 2G (76 aa).

3 consecutive repeat copies span residues 21 to 29, 30 to 38, and 39 to 47. The interval 21-47 is 3 X 9 AA approximate tandem repeats; it reads PKCPEPCPLPKCPEPCPPPKCPEPCPE. Residues 55–76 form a disordered region; sequence QQKCPPVQTPPPCQQKCPPKSK.

The protein belongs to the cornifin (SPRR) family. In terms of tissue distribution, expressed in uterus.

It is found in the cytoplasm. Its function is as follows. Cross-linked envelope protein of keratinocytes. It is a keratinocyte protein that first appears in the cell cytosol, but ultimately becomes cross-linked to membrane proteins by transglutaminase. All that results in the formation of an insoluble envelope beneath the plasma membrane. This is Small proline-rich protein 2G (Sprr2g) from Mus musculus (Mouse).